We begin with the raw amino-acid sequence, 415 residues long: Multifunctional CCA protein (415 aa).

ATP is bound by residues glycine 8 and arginine 11. CTP contacts are provided by glycine 8 and arginine 11. Mg(2+) contacts are provided by aspartate 21 and aspartate 23. Residues arginine 91, arginine 143, and arginine 146 each contribute to the ATP site. Positions 91, 143, and 146 each coordinate CTP. Residues 232 to 333 (TGVHVMMVID…TRLLERCDAL (102 aa)) form the HD domain.

The protein belongs to the tRNA nucleotidyltransferase/poly(A) polymerase family. Bacterial CCA-adding enzyme type 1 subfamily. As to quaternary structure, monomer. Can also form homodimers and oligomers. It depends on Mg(2+) as a cofactor. Requires Ni(2+) as cofactor.

It catalyses the reaction a tRNA precursor + 2 CTP + ATP = a tRNA with a 3' CCA end + 3 diphosphate. The enzyme catalyses a tRNA with a 3' CCA end + 2 CTP + ATP = a tRNA with a 3' CCACCA end + 3 diphosphate. Its function is as follows. Catalyzes the addition and repair of the essential 3'-terminal CCA sequence in tRNAs without using a nucleic acid template. Adds these three nucleotides in the order of C, C, and A to the tRNA nucleotide-73, using CTP and ATP as substrates and producing inorganic pyrophosphate. tRNA 3'-terminal CCA addition is required both for tRNA processing and repair. Also involved in tRNA surveillance by mediating tandem CCA addition to generate a CCACCA at the 3' terminus of unstable tRNAs. While stable tRNAs receive only 3'-terminal CCA, unstable tRNAs are marked with CCACCA and rapidly degraded. This Cupriavidus pinatubonensis (strain JMP 134 / LMG 1197) (Cupriavidus necator (strain JMP 134)) protein is Multifunctional CCA protein.